Reading from the N-terminus, the 647-residue chain is DNA mismatch repair protein MutL (647 aa).

Positions 375–433 (KQEEPQAVKQPTQLWQPPKQEWQPPQSLVREEQSWQPSTKPIIEEPIQEEKSWDSNEEG) are disordered. Over residues 387-400 (QLWQPPKQEWQPPQ) the composition is skewed to low complexity.

Belongs to the DNA mismatch repair MutL/HexB family.

In terms of biological role, this protein is involved in the repair of mismatches in DNA. It is required for dam-dependent methyl-directed DNA mismatch repair. May act as a 'molecular matchmaker', a protein that promotes the formation of a stable complex between two or more DNA-binding proteins in an ATP-dependent manner without itself being part of a final effector complex. This Bacillus cereus (strain AH820) protein is DNA mismatch repair protein MutL.